The chain runs to 190 residues: Protein GrpE (190 aa).

Positions 1–10 (MKKHVTEEQK) are enriched in basic and acidic residues. The disordered stretch occupies residues 1–42 (MKKHVTEEQKTSAAPEAEQASPESSAAEAATPEERISRLEEQ). Residues 12 to 30 (SAAPEAEQASPESSAAEAA) show a composition bias toward low complexity. Residues 32-42 (PEERISRLEEQ) are compositionally biased toward basic and acidic residues.

The protein belongs to the GrpE family. Homodimer.

It localises to the cytoplasm. Its function is as follows. Participates actively in the response to hyperosmotic and heat shock by preventing the aggregation of stress-denatured proteins, in association with DnaK and GrpE. It is the nucleotide exchange factor for DnaK and may function as a thermosensor. Unfolded proteins bind initially to DnaJ; upon interaction with the DnaJ-bound protein, DnaK hydrolyzes its bound ATP, resulting in the formation of a stable complex. GrpE releases ADP from DnaK; ATP binding to DnaK triggers the release of the substrate protein, thus completing the reaction cycle. Several rounds of ATP-dependent interactions between DnaJ, DnaK and GrpE are required for fully efficient folding. The polypeptide is Protein GrpE (Pelobacter propionicus (strain DSM 2379 / NBRC 103807 / OttBd1)).